The following is a 725-amino-acid chain: Kinesin-like protein KIF2C (725 aa).

Ala2 is modified (N-acetylalanine). Residues 2-254 form a globular region; that stretch reads AMDSSLQARL…CHPLTMTDPI (253 aa). Residues Ser6 and Ser22 each carry the phosphoserine modification. Residues 89 to 116 are disordered; the sequence is QKQKRRSVNSKIPAPKESLRSRSTRMST. Ser95 is modified (phosphoserine; by AURKB). Residues 98 to 101 carry the Microtubule tip localization signal motif; it reads SKIP. Phosphoserine occurs at positions 106, 109, 111, 115, 166, 175, 187, and 192. Residues 207–238 form a negative regulator of microtubule-binding region; sequence EKKAQNSEMRMKRAQEYDSSFPNWEFARMIKE. One can recognise a Kinesin motor domain in the interval 258-588; it reads RICVCVRKRP…LRYADRVKEL (331 aa). ATP-binding positions include Arg264 and 348 to 355; that span reads GQTGSGKT. The short motif at 415–418 is the Nuclear localization signal element; the sequence is KKAK. Residues Ser519, Ser621, and Ser633 each carry the phosphoserine modification. Positions 618 to 658 form a coiled coil; that stretch reads GNLSKEEEELSSQMSSFNEAMTQIRELEEKAMEELKEIIQQ.

Belongs to the TRAFAC class myosin-kinesin ATPase superfamily. Kinesin family. MCAK/KIF2 subfamily. As to quaternary structure, interacts with CENPH. Interacts with MTUS2/TIP150; the interaction is direct. Interacts with MAPRE1; the interaction is direct, regulated by phosphorylation and is probably required for targeting to growing microtubule plus ends. Interacts with KIF18B at microtubule tips; this interaction increases the affinity of both partners for microtubule plus ends and is required for robust microtubule depolymerization. Phosphorylation by AURKA or AURKB strongly reduces KIF18B-binding. Post-translationally, phosphorylation by AURKB, regulates association with centromeres and kinetochores and the microtubule depolymerization activity. Ubiquitinated. In terms of tissue distribution, expressed at high levels in thymus and testis, at low levels in small intestine, the mucosal lining of colon, and placenta, and at very low levels in spleen and ovary; expression is not detected in prostate, peripheral blood Leukocytes, heart, brain, lung, liver, skeletal muscle, kidney or pancreas. Isoform 2 is testis-specific.

Its subcellular location is the cytoplasm. The protein localises to the cytoskeleton. The protein resides in the nucleus. It is found in the chromosome. It localises to the centromere. Its subcellular location is the kinetochore. In complex with KIF18B, constitutes the major microtubule plus-end depolymerizing activity in mitotic cells. Regulates the turnover of microtubules at the kinetochore and functions in chromosome segregation during mitosis. Plays a role in chromosome congression and is required for the lateral to end-on conversion of the chromosome-microtubule attachment. The protein is Kinesin-like protein KIF2C (KIF2C) of Homo sapiens (Human).